Here is a 357-residue protein sequence, read N- to C-terminus: UDP-N-acetylglucosamine--N-acetylmuramyl-(pentapeptide) pyrophosphoryl-undecaprenol N-acetylglucosamine transferase (357 aa).

Residues 11 to 13, Asn120, Arg161, Ser188, and Gln281 each bind UDP-N-acetyl-alpha-D-glucosamine; that span reads TGG.

It belongs to the glycosyltransferase 28 family. MurG subfamily.

It localises to the cell inner membrane. It carries out the reaction di-trans,octa-cis-undecaprenyl diphospho-N-acetyl-alpha-D-muramoyl-L-alanyl-D-glutamyl-meso-2,6-diaminopimeloyl-D-alanyl-D-alanine + UDP-N-acetyl-alpha-D-glucosamine = di-trans,octa-cis-undecaprenyl diphospho-[N-acetyl-alpha-D-glucosaminyl-(1-&gt;4)]-N-acetyl-alpha-D-muramoyl-L-alanyl-D-glutamyl-meso-2,6-diaminopimeloyl-D-alanyl-D-alanine + UDP + H(+). The protein operates within cell wall biogenesis; peptidoglycan biosynthesis. Cell wall formation. Catalyzes the transfer of a GlcNAc subunit on undecaprenyl-pyrophosphoryl-MurNAc-pentapeptide (lipid intermediate I) to form undecaprenyl-pyrophosphoryl-MurNAc-(pentapeptide)GlcNAc (lipid intermediate II). The protein is UDP-N-acetylglucosamine--N-acetylmuramyl-(pentapeptide) pyrophosphoryl-undecaprenol N-acetylglucosamine transferase of Prochlorococcus marinus (strain SARG / CCMP1375 / SS120).